The chain runs to 337 residues: Glycerol-3-phosphate dehydrogenase [NAD(P)+] (337 aa).

NADPH-binding residues include W11, R30, and K102. Residues K102, G138, and S140 each contribute to the sn-glycerol 3-phosphate site. A142 is an NADPH binding site. The sn-glycerol 3-phosphate site is built by K193, D246, S256, R257, and N258. K193 acts as the Proton acceptor in catalysis. R257 contributes to the NADPH binding site. Positions 281 and 283 each coordinate NADPH.

Belongs to the NAD-dependent glycerol-3-phosphate dehydrogenase family.

It localises to the cytoplasm. It carries out the reaction sn-glycerol 3-phosphate + NAD(+) = dihydroxyacetone phosphate + NADH + H(+). The catalysed reaction is sn-glycerol 3-phosphate + NADP(+) = dihydroxyacetone phosphate + NADPH + H(+). The protein operates within membrane lipid metabolism; glycerophospholipid metabolism. Catalyzes the reduction of the glycolytic intermediate dihydroxyacetone phosphate (DHAP) to sn-glycerol 3-phosphate (G3P), the key precursor for phospholipid synthesis. The chain is Glycerol-3-phosphate dehydrogenase [NAD(P)+] from Variovorax paradoxus (strain S110).